The sequence spans 249 residues: Glutathione S-transferase S1 (249 aa).

The span at methionine 1–proline 38 shows a compositional bias: low complexity. A disordered region spans residues methionine 1–proline 42. The GST N-terminal domain maps to histidine 48–glycine 125. Residues tyrosine 54, tryptophan 85, lysine 89, glutamine 96–methionine 97, and glutamine 109–serine 110 each bind glutathione. A GST C-terminal domain is found at threonine 127–valine 249.

The protein belongs to the GST superfamily. Sigma family. As to quaternary structure, homodimer.

It carries out the reaction RX + glutathione = an S-substituted glutathione + a halide anion + H(+). Conjugation of reduced glutathione to a wide number of exogenous and endogenous hydrophobic electrophiles. May be involved in the detoxification of metabolites produced during cellular division and morphogenesis. The protein is Glutathione S-transferase S1 of Drosophila melanogaster (Fruit fly).